The chain runs to 39 residues: Alpha-conotoxin ArIA (39 aa).

The propeptide occupies 1-17; the sequence is SDGRNVAAKAFHRIGRT. 2 cysteine pairs are disulfide-bonded: cysteine 22–cysteine 28 and cysteine 23–cysteine 36. The segment at 24 to 26 is ser-Xaa-Pro motif, crucial for potent interaction with nAChR; that stretch reads SNP. 4-hydroxyproline; in ArIA is present on proline 33.

This sequence belongs to the conotoxin A superfamily. Expressed by the venom duct.

The protein resides in the secreted. Its function is as follows. Alpha-conotoxins act on postsynaptic membranes, they bind to the nicotinic acetylcholine receptors (nAChR) and thus inhibit them. This toxin acts as a competitive inhibitor and is 3-fold more potent on alpha-7/CHRNA7 nAChRs (IC(50)=6 nM) than on alpha-3-beta-2/CHRNA3-CHRNB2 nAChR (IC(50)=18 nM). Functionally, acts as a competitive inhibitor and is 33-fold more potent on alpha-7/CHRNA7 nAChRs (IC(50)=1.8 nM) than on alpha-3-beta-2/CHRNA3-CHRNB2 nAChR (IC(50)=60.1 nM). The sequence is that of Alpha-conotoxin ArIA from Conus arenatus (Sand-dusted cone).